Consider the following 388-residue polypeptide: Phosphopentomutase (388 aa).

Residues Asp11, Asp283, His288, Asp324, His325, and His336 each contribute to the Mn(2+) site.

It belongs to the phosphopentomutase family. Mn(2+) is required as a cofactor.

The protein resides in the cytoplasm. The catalysed reaction is 2-deoxy-alpha-D-ribose 1-phosphate = 2-deoxy-D-ribose 5-phosphate. It carries out the reaction alpha-D-ribose 1-phosphate = D-ribose 5-phosphate. It participates in carbohydrate degradation; 2-deoxy-D-ribose 1-phosphate degradation; D-glyceraldehyde 3-phosphate and acetaldehyde from 2-deoxy-alpha-D-ribose 1-phosphate: step 1/2. Functionally, isomerase that catalyzes the conversion of deoxy-ribose 1-phosphate (dRib-1-P) and ribose 1-phosphate (Rib-1-P) to deoxy-ribose 5-phosphate (dRib-5-P) and ribose 5-phosphate (Rib-5-P), respectively. The sequence is that of Phosphopentomutase from Anaeromyxobacter sp. (strain K).